The sequence spans 470 residues: 6-phospho-beta-galactosidase 1 (470 aa).

Gln-23, His-120, Asn-163, Glu-164, and Asn-300 together coordinate D-galactose 6-phosphate. Glu-164 (proton donor) is an active-site residue. Glu-378 acts as the Nucleophile in catalysis. 4 residues coordinate D-galactose 6-phosphate: Ser-434, Trp-435, Lys-441, and Tyr-443.

The protein belongs to the glycosyl hydrolase 1 family.

It catalyses the reaction a 6-phospho-beta-D-galactoside + H2O = D-galactose 6-phosphate + an alcohol. The protein operates within carbohydrate metabolism; lactose degradation; D-galactose 6-phosphate and beta-D-glucose from lactose 6-phosphate: step 1/1. The protein is 6-phospho-beta-galactosidase 1 of Streptococcus pneumoniae (strain ATCC BAA-255 / R6).